The chain runs to 130 residues: UPF0251 protein Mevan_1492 (130 aa).

It belongs to the UPF0251 family.

The protein is UPF0251 protein Mevan_1492 of Methanococcus vannielii (strain ATCC 35089 / DSM 1224 / JCM 13029 / OCM 148 / SB).